A 226-amino-acid chain; its full sequence is MGQKVNPNGFRYGVTKAHNTTWFAHKATYGSKLVEDVKIYKFFDKFTRKFQIGKVEIQRDLNNKVSVFLHTSKPAAILGENGTNIKNLTVALQKHLKNKKLDVNLKVLTIKEPDLNARLLAEMIATKLENRESFRSAQKIAIRSALKAGAKGIKTAVSGRLNGVDMARTEGYSEGEMKLHTLRQDVSYATATARTTYGAIGVKVWVSLGEILQGDRTFHHASTKKN.

A KH type-2 domain is found at 39–109; the sequence is IYKFFDKFTR…KLDVNLKVLT (71 aa).

This sequence belongs to the universal ribosomal protein uS3 family. As to quaternary structure, part of the 30S ribosomal subunit. Forms a tight complex with proteins S10 and S14.

In terms of biological role, binds the lower part of the 30S subunit head. Binds mRNA in the 70S ribosome, positioning it for translation. This chain is Small ribosomal subunit protein uS3, found in Mycoplasmopsis synoviae (strain 53) (Mycoplasma synoviae).